The primary structure comprises 467 residues: Glutamate--tRNA ligase (467 aa).

The short motif at 9–19 (PSPTGNLHIGS) is the 'HIGH' region element. Positions 237–241 (KISKR) match the 'KMSKS' region motif. Residue K240 coordinates ATP.

This sequence belongs to the class-I aminoacyl-tRNA synthetase family. Glutamate--tRNA ligase type 1 subfamily. As to quaternary structure, monomer.

The protein localises to the cytoplasm. It carries out the reaction tRNA(Glu) + L-glutamate + ATP = L-glutamyl-tRNA(Glu) + AMP + diphosphate. Its function is as follows. Catalyzes the attachment of glutamate to tRNA(Glu) in a two-step reaction: glutamate is first activated by ATP to form Glu-AMP and then transferred to the acceptor end of tRNA(Glu). This Buchnera aphidicola subsp. Acyrthosiphon pisum (strain APS) (Acyrthosiphon pisum symbiotic bacterium) protein is Glutamate--tRNA ligase.